Consider the following 750-residue polypeptide: Photosystem I P700 chlorophyll a apoprotein A1 (750 aa).

Helical transmembrane passes span Val70–Ala93, Leu156–His179, Leu195–Leu219, Thr291–Tyr309, Trp346–Tyr369, Leu385–Val411, Ala433–His455, and Phe531–Leu549. Positions 573 and 582 each coordinate [4Fe-4S] cluster. 2 helical membrane-spanning segments follow: residues His589–Trp610 and Leu664–Phe686. Position 675 (His675) interacts with chlorophyll a'. Met683 and Tyr691 together coordinate chlorophyll a. Position 692 (Trp692) interacts with phylloquinone. Residues Ala724–Ala744 traverse the membrane as a helical segment.

It belongs to the PsaA/PsaB family. As to quaternary structure, the PsaA/B heterodimer binds the P700 chlorophyll special pair and subsequent electron acceptors. PSI consists of a core antenna complex that captures photons, and an electron transfer chain that converts photonic excitation into a charge separation. The eukaryotic PSI reaction center is composed of at least 11 subunits. Requires P700 is a chlorophyll a/chlorophyll a' dimer, A0 is one or more chlorophyll a, A1 is one or both phylloquinones and FX is a shared 4Fe-4S iron-sulfur center. as cofactor.

It is found in the plastid. It localises to the chloroplast thylakoid membrane. The catalysed reaction is reduced [plastocyanin] + hnu + oxidized [2Fe-2S]-[ferredoxin] = oxidized [plastocyanin] + reduced [2Fe-2S]-[ferredoxin]. PsaA and PsaB bind P700, the primary electron donor of photosystem I (PSI), as well as the electron acceptors A0, A1 and FX. PSI is a plastocyanin-ferredoxin oxidoreductase, converting photonic excitation into a charge separation, which transfers an electron from the donor P700 chlorophyll pair to the spectroscopically characterized acceptors A0, A1, FX, FA and FB in turn. Oxidized P700 is reduced on the lumenal side of the thylakoid membrane by plastocyanin. This is Photosystem I P700 chlorophyll a apoprotein A1 from Helianthus annuus (Common sunflower).